The following is a 256-amino-acid chain: MNNIWWQTKGQGNVHLVLLHGWGLNAEVWRCIDEELSSHFTLHLVDLPGFGRSRGFGALSLADMAEAVLQQAPDKAIWLGWSLGGLVASQIVLTHPERVQALVTVASSPCFSARDEWPGIKPDVLAGFQQQLSDDFQRTVERFLALQTMGTETARQDARALKKTVLALPMPEVDVLNGGLEILKTVDLRQPLQNVSMPFLRLYGYLDGLVPRKVVPMLDKLWPHSESYIFAKAAHAPFISHPVEFCHLLVALKQRV.

Positions 15–242 constitute an AB hydrolase-1 domain; the sequence is HLVLLHGWGL…AAHAPFISHP (228 aa). Substrate contacts are provided by residues W22, 82-83, and 143-147; these read SL and FLALQ. The active-site Nucleophile is the S82. Residues D207 and H235 contribute to the active site. H235 contacts substrate.

Belongs to the AB hydrolase superfamily. Carboxylesterase BioH family. As to quaternary structure, monomer.

The protein resides in the cytoplasm. The catalysed reaction is 6-carboxyhexanoyl-[ACP] methyl ester + H2O = 6-carboxyhexanoyl-[ACP] + methanol + H(+). It functions in the pathway cofactor biosynthesis; biotin biosynthesis. In terms of biological role, the physiological role of BioH is to remove the methyl group introduced by BioC when the pimeloyl moiety is complete. It allows to synthesize pimeloyl-ACP via the fatty acid synthetic pathway through the hydrolysis of the ester bonds of pimeloyl-ACP esters. In Escherichia coli (strain 55989 / EAEC), this protein is Pimeloyl-[acyl-carrier protein] methyl ester esterase.